A 336-amino-acid polypeptide reads, in one-letter code: D-aspartate oxidase (336 aa).

Residues glutamate 34, lysine 35, threonine 41, serine 42, glycine 304, valine 308, and serine 309 each coordinate FAD. The Microbody targeting signal motif lies at 334–336 (SKL).

It belongs to the DAMOX/DASOX family. As to quaternary structure, monomer. FAD serves as cofactor.

It localises to the peroxisome matrix. The enzyme catalyses D-aspartate + O2 + H2O = oxaloacetate + H2O2 + NH4(+). It catalyses the reaction D-glutamate + O2 + H2O = H2O2 + 2-oxoglutarate + NH4(+). Selectively catalyzes the oxidative deamination of acidic amino acids. Suppresses the level of D-aspartate in the brain, an amino acid that can act as an agonist for glutamate receptors. Protects the organism from the toxicity of D-amino acids. May also function in the intestine. In Octopus vulgaris (Common octopus), this protein is D-aspartate oxidase.